Here is a 491-residue protein sequence, read N- to C-terminus: G2/mitotic-specific cyclin-A (491 aa).

Residues 1–21 (MASFQIHQDMSNKENPGIKIP) form a disordered region. The Cyclin N-terminal domain maps to 206-332 (DILEYFRESE…ILKILSFDLC (127 aa)).

Belongs to the cyclin family. Cyclin AB subfamily. Component of the Frs-CycA-Cdk1 complex composed of CycA, Cdk1 and Z600. Interacts (via C-terminus) with Z600. Interacts with otu and (via C-terminus) with bam; the interaction stabilizes CycA by negatively regulating its ubiquitination. In terms of processing, ubiquitinated. Ubiquitination state is negatively regulated by a deubiquitinase complex made up of bam and otu.

In terms of biological role, essential for the control of the cell cycle at the G2/M (mitosis) transition. Interacts with the Cdk1 and Cdk2 protein kinases to form MPF. G2/M cyclins accumulate steadily during G2 and are abruptly destroyed at mitosis. This Drosophila melanogaster (Fruit fly) protein is G2/mitotic-specific cyclin-A (CycA).